A 365-amino-acid polypeptide reads, in one-letter code: tRNA/tmRNA (uracil-C(5))-methyltransferase (365 aa).

5 residues coordinate S-adenosyl-L-methionine: Gln189, Tyr217, Asn222, Glu238, and Asp298. The active-site Nucleophile is Cys323. The active-site Proton acceptor is the Glu357.

It belongs to the class I-like SAM-binding methyltransferase superfamily. RNA M5U methyltransferase family. TrmA subfamily.

The catalysed reaction is uridine(54) in tRNA + S-adenosyl-L-methionine = 5-methyluridine(54) in tRNA + S-adenosyl-L-homocysteine + H(+). It catalyses the reaction uridine(341) in tmRNA + S-adenosyl-L-methionine = 5-methyluridine(341) in tmRNA + S-adenosyl-L-homocysteine + H(+). Dual-specificity methyltransferase that catalyzes the formation of 5-methyluridine at position 54 (m5U54) in all tRNAs, and that of position 341 (m5U341) in tmRNA (transfer-mRNA). The protein is tRNA/tmRNA (uracil-C(5))-methyltransferase of Shewanella sp. (strain MR-4).